The primary structure comprises 148 residues: uncharacterized protein (148 aa).

The span at 1–17 (MEGLQRSTISFRRQGSS) shows a compositional bias: polar residues. Residues 1-148 (MEGLQRSTIS…SRRRIVTKKR (148 aa)) are disordered. Basic and acidic residues-rich tracts occupy residues 36–47 (EQKDESQRDEQP) and 58–67 (KPIDEKDKLR). 2 positions are modified to phosphoserine: Ser-100 and Ser-107. Basic residues predominate over residues 128–148 (VNPRKRPPKRRSRRRIVTKKR).

This is an uncharacterized protein from Arabidopsis thaliana (Mouse-ear cress).